The primary structure comprises 303 residues: Glycine--tRNA ligase alpha subunit (303 aa).

The protein belongs to the class-II aminoacyl-tRNA synthetase family. In terms of assembly, tetramer of two alpha and two beta subunits.

It localises to the cytoplasm. The catalysed reaction is tRNA(Gly) + glycine + ATP = glycyl-tRNA(Gly) + AMP + diphosphate. The chain is Glycine--tRNA ligase alpha subunit from Streptococcus equi subsp. equi (strain 4047).